A 201-amino-acid polypeptide reads, in one-letter code: UPF0637 protein LSEI_1198 (201 aa).

Belongs to the UPF0637 family.

This is UPF0637 protein LSEI_1198 from Lacticaseibacillus paracasei (strain ATCC 334 / BCRC 17002 / CCUG 31169 / CIP 107868 / KCTC 3260 / NRRL B-441) (Lactobacillus paracasei).